We begin with the raw amino-acid sequence, 364 residues long: Fructose-bisphosphate aldolase B (364 aa).

Ala2 is subject to N-acetylalanine. Lys13 carries the N6-succinyllysine modification. A Phosphoserine modification is found at Ser36. Thr39 is modified (phosphothreonine). Residue Arg43 coordinates beta-D-fructose 1,6-bisphosphate. At Ser89 the chain carries Phosphoserine. Phosphothreonine is present on Thr119. The residue at position 121 (Lys121) is an N6-succinyllysine. Ser132 carries the post-translational modification Phosphoserine. The active-site Proton acceptor is the Glu188. Catalysis depends on Lys230, which acts as the Schiff-base intermediate with dihydroxyacetone-P. Ser272, Ser276, Ser299, and Ser301 each carry phosphoserine. Residue 272 to 274 (SGG) coordinates beta-D-fructose 1,6-bisphosphate. Position 304 (Arg304) interacts with beta-D-fructose 1,6-bisphosphate. Ser309 carries the post-translational modification Phosphoserine. N6-succinyllysine is present on Lys317.

It belongs to the class I fructose-bisphosphate aldolase family. As to quaternary structure, homotetramer. Interacts with BBS1, BBS2, BBS4 and BBS7. Forms a ternary complex with G6PD and TP53; this interaction is direct.

The protein resides in the cytoplasm. It is found in the cytosol. It localises to the cytoskeleton. The protein localises to the microtubule organizing center. Its subcellular location is the centrosome. The protein resides in the centriolar satellite. It carries out the reaction beta-D-fructose 1,6-bisphosphate = D-glyceraldehyde 3-phosphate + dihydroxyacetone phosphate. The catalysed reaction is beta-D-fructose 1-phosphate = D-glyceraldehyde + dihydroxyacetone phosphate. Its pathway is carbohydrate degradation; glycolysis; D-glyceraldehyde 3-phosphate and glycerone phosphate from D-glucose: step 4/4. The protein operates within carbohydrate biosynthesis; gluconeogenesis. It functions in the pathway carbohydrate metabolism; fructose metabolism. Catalyzes the aldol cleavage of fructose 1,6-biphosphate to form two triosephosphates dihydroxyacetone phosphate and D-glyceraldehyde 3-phosphate in glycolysis as well as the reverse stereospecific aldol addition reaction in gluconeogenesis. In fructolysis, metabolizes fructose 1-phosphate derived from the phosphorylation of dietary fructose by fructokinase into dihydroxyacetone phosphate and D-glyceraldehyde. Acts as an adapter independently of its enzymatic activity, exerts a tumor suppressor role by stabilizing the ternary complex with G6PD and TP53 to inhibit G6PD activity and keep oxidative pentose phosphate metabolism in check. The sequence is that of Fructose-bisphosphate aldolase B (ALDOB) from Pongo abelii (Sumatran orangutan).